We begin with the raw amino-acid sequence, 580 residues long: 2-isopropylmalate synthase (580 aa).

A compositionally biased stretch (polar residues) spans 1-11 (MSATAFPTLST). The segment at 1–37 (MSATAFPTLSTPAGEIPATAPAWNRQRRSQMPSHRYR) is disordered. The region spanning 61-334 (PLWVPVDLRD…DPMIDFSDID (274 aa)) is the Pyruvate carboxyltransferase domain. 4 residues coordinate Mg(2+): D70, H273, H275, and N309. Residues 476-580 (EGEADAPQAD…ARAVAEVRPG (105 aa)) form a regulatory domain region.

This sequence belongs to the alpha-IPM synthase/homocitrate synthase family. LeuA type 2 subfamily. Homodimer. Mg(2+) serves as cofactor.

Its subcellular location is the cytoplasm. The enzyme catalyses 3-methyl-2-oxobutanoate + acetyl-CoA + H2O = (2S)-2-isopropylmalate + CoA + H(+). It functions in the pathway amino-acid biosynthesis; L-leucine biosynthesis; L-leucine from 3-methyl-2-oxobutanoate: step 1/4. Functionally, catalyzes the condensation of the acetyl group of acetyl-CoA with 3-methyl-2-oxobutanoate (2-ketoisovalerate) to form 3-carboxy-3-hydroxy-4-methylpentanoate (2-isopropylmalate). In Nocardia farcinica (strain IFM 10152), this protein is 2-isopropylmalate synthase.